The sequence spans 249 residues: MTRKLVLLRHGQSQWNSMNRFTGWVDIGLTEQGHQEATMAGHLMKEEGLEFDVAHTSLLKRAIHTLQDALKALDQDWLPIYKSWRLNERHYGALQGLDKIDTAAKHGEEQVNIWRRSYDIQPPPIDLDDPSHPMRDRRYAALDRKVLPVTESLKNTLERVLPYWNDAIAPQLNDNKTVLISAHGNSLRALYKYLNQESDEKILNVNIPTGIPLLFELSDTLQVVSYRYLGDPDAAQRASEMVANQGKAK.

Substrate-binding positions include 9-16 (RHGQSQWN), 22-23 (TG), arginine 61, 88-91 (ERHY), lysine 99, 115-116 (RR), and 184-185 (GN). Histidine 10 acts as the Tele-phosphohistidine intermediate in catalysis. The Proton donor/acceptor role is filled by glutamate 88.

This sequence belongs to the phosphoglycerate mutase family. BPG-dependent PGAM subfamily. Homodimer.

The catalysed reaction is (2R)-2-phosphoglycerate = (2R)-3-phosphoglycerate. The protein operates within carbohydrate degradation; glycolysis; pyruvate from D-glyceraldehyde 3-phosphate: step 3/5. In terms of biological role, catalyzes the interconversion of 2-phosphoglycerate and 3-phosphoglycerate. The sequence is that of 2,3-bisphosphoglycerate-dependent phosphoglycerate mutase from Xylella fastidiosa (strain 9a5c).